The chain runs to 262 residues: Hydroxyethylthiazole kinase (262 aa).

Met50 contributes to the substrate binding site. Positions 125 and 171 each coordinate ATP. Residue Gly198 coordinates substrate.

This sequence belongs to the Thz kinase family. Mg(2+) is required as a cofactor.

It carries out the reaction 5-(2-hydroxyethyl)-4-methylthiazole + ATP = 4-methyl-5-(2-phosphooxyethyl)-thiazole + ADP + H(+). The protein operates within cofactor biosynthesis; thiamine diphosphate biosynthesis; 4-methyl-5-(2-phosphoethyl)-thiazole from 5-(2-hydroxyethyl)-4-methylthiazole: step 1/1. Its function is as follows. Catalyzes the phosphorylation of the hydroxyl group of 4-methyl-5-beta-hydroxyethylthiazole (THZ). This is Hydroxyethylthiazole kinase from Escherichia coli O7:K1 (strain IAI39 / ExPEC).